Here is a 222-residue protein sequence, read N- to C-terminus: UPF0502 protein Shewmr4_1554 (222 aa).

A compositionally biased stretch (polar residues) spans 175–193; sequence SLSADSPSAGSNSLNAQDR. The interval 175–194 is disordered; that stretch reads SLSADSPSAGSNSLNAQDRQ.

The protein belongs to the UPF0502 family.

The polypeptide is UPF0502 protein Shewmr4_1554 (Shewanella sp. (strain MR-4)).